The primary structure comprises 326 residues: Phosphate acyltransferase (326 aa).

Belongs to the PlsX family. As to quaternary structure, homodimer. Probably interacts with PlsY.

It localises to the cytoplasm. It catalyses the reaction a fatty acyl-[ACP] + phosphate = an acyl phosphate + holo-[ACP]. Its pathway is lipid metabolism; phospholipid metabolism. In terms of biological role, catalyzes the reversible formation of acyl-phosphate (acyl-PO(4)) from acyl-[acyl-carrier-protein] (acyl-ACP). This enzyme utilizes acyl-ACP as fatty acyl donor, but not acyl-CoA. This chain is Phosphate acyltransferase, found in Petrotoga mobilis (strain DSM 10674 / SJ95).